Here is a 230-residue protein sequence, read N- to C-terminus: uncharacterized protein (230 aa).

A helical membrane pass occupies residues alanine 17 to isoleucine 37. Asparagine 126 carries N-linked (GlcNAc...) asparagine glycosylation.

Its subcellular location is the membrane. This is an uncharacterized protein from Mus musculus (Mouse).